A 94-amino-acid polypeptide reads, in one-letter code: Putative pterin-4-alpha-carbinolamine dehydratase (94 aa).

Belongs to the pterin-4-alpha-carbinolamine dehydratase family.

It carries out the reaction (4aS,6R)-4a-hydroxy-L-erythro-5,6,7,8-tetrahydrobiopterin = (6R)-L-erythro-6,7-dihydrobiopterin + H2O. This is Putative pterin-4-alpha-carbinolamine dehydratase from Mycobacterium tuberculosis (strain ATCC 25177 / H37Ra).